Here is a 189-residue protein sequence, read N- to C-terminus: Ribosome maturation factor RimM (189 aa).

The region spanning 95–169 (DEDEFFQTDL…IIKVEPHAAG (75 aa)) is the PRC barrel domain. Positions 168 to 189 (AGLIADEHDNPPHESGKKPKKP) are disordered. The span at 172–189 (ADEHDNPPHESGKKPKKP) shows a compositional bias: basic and acidic residues.

It belongs to the RimM family. Binds ribosomal protein uS19.

The protein localises to the cytoplasm. An accessory protein needed during the final step in the assembly of 30S ribosomal subunit, possibly for assembly of the head region. Essential for efficient processing of 16S rRNA. May be needed both before and after RbfA during the maturation of 16S rRNA. It has affinity for free ribosomal 30S subunits but not for 70S ribosomes. The protein is Ribosome maturation factor RimM of Brucella abortus (strain S19).